Here is a 168-residue protein sequence, read N- to C-terminus: Disulfide bond formation protein B (168 aa).

Residues 1 to 13 (MFLTYFDAMPRRV) are Cytoplasmic-facing. A helical membrane pass occupies residues 14–30 (LALVSLACVALLAFGLY). Residues 31–48 (LQHVVGLEPCPMCIVQRY) are Periplasmic-facing. A disulfide bridge connects residues Cys-40 and Cys-43. Residues 49-64 (ALVLVAVVAGITAVAK) form a helical membrane-spanning segment. At 65–70 (SRGLLI) the chain is on the cytoplasmic side. A helical membrane pass occupies residues 71–88 (TGSGLLVLLSGFGAFVAA). The Periplasmic segment spans residues 89–144 (RQSFLQWYPPEVASCGRDFYGMIETFPLKRAIPMIFKGSGDCTKIDWTFLGLSIAN). Residues Cys-103 and Cys-130 are joined by a disulfide bond. The helical transmembrane segment at 145–163 (WSFLCFVAIALVGLVLITR) threads the bilayer. At 164 to 168 (LARQR) the chain is on the cytoplasmic side.

This sequence belongs to the DsbB family.

Its subcellular location is the cell inner membrane. Functionally, required for disulfide bond formation in some periplasmic proteins. Acts by oxidizing the DsbA protein. In Polaromonas sp. (strain JS666 / ATCC BAA-500), this protein is Disulfide bond formation protein B.